The primary structure comprises 355 residues: DnaJ homolog dnj-20 (355 aa).

The first 21 residues, 1–21 (MRILNVSLLVLASSLVAFVEC), serve as a signal peptide directing secretion. One can recognise a J domain in the interval 24–89 (DFYKILGVAK…EKRAMYDRHG (66 aa)).

In Caenorhabditis elegans, this protein is DnaJ homolog dnj-20.